Here is a 63-residue protein sequence, read N- to C-terminus: MKAQELRTKTVEELNAELVNLLGEQFKLRMQAATGQLQQTHQLKQVRRSIAQVKTVLTEKAGA.

The protein belongs to the universal ribosomal protein uL29 family.

The chain is Large ribosomal subunit protein uL29 from Histophilus somni (strain 129Pt) (Haemophilus somnus).